The chain runs to 253 residues: 3-deoxy-manno-octulosonate cytidylyltransferase (253 aa).

This sequence belongs to the KdsB family.

It is found in the cytoplasm. It carries out the reaction 3-deoxy-alpha-D-manno-oct-2-ulosonate + CTP = CMP-3-deoxy-beta-D-manno-octulosonate + diphosphate. Its pathway is nucleotide-sugar biosynthesis; CMP-3-deoxy-D-manno-octulosonate biosynthesis; CMP-3-deoxy-D-manno-octulosonate from 3-deoxy-D-manno-octulosonate and CTP: step 1/1. The protein operates within bacterial outer membrane biogenesis; lipopolysaccharide biosynthesis. Functionally, activates KDO (a required 8-carbon sugar) for incorporation into bacterial lipopolysaccharide in Gram-negative bacteria. This Acidithiobacillus ferrooxidans (strain ATCC 23270 / DSM 14882 / CIP 104768 / NCIMB 8455) (Ferrobacillus ferrooxidans (strain ATCC 23270)) protein is 3-deoxy-manno-octulosonate cytidylyltransferase.